A 320-amino-acid polypeptide reads, in one-letter code: Probable cell division protein WhiA (320 aa).

The H-T-H motif DNA-binding region spans 282-315 (SLEELGRAARPQISKDAVAGRIRRLLQRAEKAEQ).

This sequence belongs to the WhiA family.

In terms of biological role, involved in cell division and chromosome segregation. The chain is Probable cell division protein WhiA from Bifidobacterium animalis subsp. lactis (strain AD011).